A 752-amino-acid polypeptide reads, in one-letter code: MIKNQGDRYHLIDKNALEEKKLDSNELTEFVKSSGLIDIGKKYNIVSIIGSQSTGKSTLLNYLFGTQFDVQNRQQSVGQTTVGIWISKDVKNNVVVLDVEGSDSVERKSGENMVENQTALMALAMSHCFIINVFVNALGQHTSCQLSIIKIIMQQNLKLFQQDTVKHIIFVVRDWDEEYNYDEASRKLNGYLLNIWNEIPKPDQYRETDFHELFSVQVVTLVYYKLKNEFAEQTNQLHSKLANQQDPNFIFKDFDYEKNVRWSDMPQYLSNIWVVIANNKDLNLPNEKILISNMRCQQIKLEALEGVKDLTEDLQNRVRTQFVENFGQQCLSILGVAQKIYDKDAKDYHADVYKEKEKELRDELMNKFYTYFQRQTESLKQHYMNRLSENLETLKRESIYDLPDKLNEVDLLKVNFEESLSKSVIEKGLWQEQDHVGFFNQQFDNQLKSFVEAQLASFKQQLDNIIKSECDKIVSQQVLNISPKFWSQIDADYYTMISDKYSKYDALLSGLRVQWKQIDDYLSKFEEDSFHNLKQVIAVASGRFKDQLFQQFKAQFVRTEDGQPRNWQKTTEEEIFHIYTEARDKVFSFLDILRIRKVKFIRIQQTMKKIAKTHLAPFTPLKEKISYQISADTDSDDVVLNEVFYTQVKMQLAEDIDVQYQDAIQKHKQDFLQNIPKPFWFLLLFFMYDDVLRWMGNPLFLYPILIILCFIGFCIAIGLHSLPKLAFQTVFRTINQALLPLIFGGISKLKTS.

Residues 1–674 lie on the Cytoplasmic side of the membrane; sequence MIKNQGDRYH…QKHKQDFLQN (674 aa). The GB1/RHD3-type G domain occupies 40 to 265; sequence GKKYNIVSII…YEKNVRWSDM (226 aa). 50–57 serves as a coordination point for GTP; it reads GSQSTGKS. Residues 445 to 465 are a coiled coil; it reads NQLKSFVEAQLASFKQQLDNI. Residues 675–695 traverse the membrane as a helical segment; that stretch reads IPKPFWFLLLFFMYDDVLRWM. Residues 696–698 are Lumenal-facing; sequence GNP. The chain crosses the membrane as a helical span at residues 699–719; the sequence is LFLYPILIILCFIGFCIAIGL. Over 720 to 752 the chain is Cytoplasmic; it reads HSLPKLAFQTVFRTINQALLPLIFGGISKLKTS.

This sequence belongs to the TRAFAC class dynamin-like GTPase superfamily. GB1/RHD3 GTPase family. RHD3 subfamily.

The protein resides in the endoplasmic reticulum membrane. Probable GTP-binding protein that may be involved in cell development. The protein is Protein SEY1 homolog 1 of Paramecium tetraurelia.